The primary structure comprises 156 residues: Transcription elongation factor GreA (156 aa).

Residues 1–32 (MKKVRLTREGYEKLKKELEDLKRKFMYEISER) are a coiled coil.

It belongs to the GreA/GreB family.

In terms of biological role, necessary for efficient RNA polymerase transcription elongation past template-encoded arresting sites. The arresting sites in DNA have the property of trapping a certain fraction of elongating RNA polymerases that pass through, resulting in locked ternary complexes. Cleavage of the nascent transcript by cleavage factors such as GreA or GreB allows the resumption of elongation from the new 3'terminus. GreA releases sequences of 2 to 3 nucleotides. The protein is Transcription elongation factor GreA of Thermotoga maritima (strain ATCC 43589 / DSM 3109 / JCM 10099 / NBRC 100826 / MSB8).